A 203-amino-acid polypeptide reads, in one-letter code: Endo-type membrane-bound lytic murein transglycosylase A (203 aa).

Positions 1 to 15 are cleaved as a signal peptide; sequence MKLRWFAFLIVLLAG. Cys16 is lipidated: N-palmitoyl cysteine. Residue Cys16 is the site of S-diacylglycerol cysteine attachment.

The protein belongs to the transglycosylase Slt family.

It is found in the cell outer membrane. It catalyses the reaction Endolytic cleavage of the (1-&gt;4)-beta-glycosidic linkage between N-acetylmuramic acid (MurNAc) and N-acetylglucosamine (GlcNAc) residues in peptidoglycan with concomitant formation of a 1,6-anhydrobond in the MurNAc residue.. In terms of biological role, murein-degrading enzyme. May play a role in recycling of muropeptides during cell elongation and/or cell division. Preferentially cleaves at a distance of more than two disaccharide units from the ends of the glycan chain. In Escherichia coli O1:K1 / APEC, this protein is Endo-type membrane-bound lytic murein transglycosylase A.